A 305-amino-acid polypeptide reads, in one-letter code: Putative ankyrin repeat protein RF_0580 (305 aa).

ANK repeat units follow at residues 5 to 34 (YNKNNLFAKLAYGDLSEVQALLKSGVNIDE), 39 to 68 (RGETALYNTLFTGYMDRAAFLLKHKASPNI), 72 to 101 (SGQTILYLLVMNNSIDKMKFLFENTTNIDL), 107 to 136 (CGHSPLHAATFNENIEAMELLLKKGADINS), 140 to 169 (FGASALHGTIYNNKLKAAELLLNHGADVNA), 173 to 202 (YEDTILHNIIGTNNIEAAKFLLQNGADVNI), and 206 to 235 (NNFTPLDRAILGQHKELAELFLKSGATIKI).

This chain is Putative ankyrin repeat protein RF_0580, found in Rickettsia felis (strain ATCC VR-1525 / URRWXCal2) (Rickettsia azadi).